The sequence spans 460 residues: Ribosomal protein uS12 methylthiotransferase RimO (460 aa).

The MTTase N-terminal domain occupies 16–130 (NKIHFISLGC…ILSAIESKES (115 aa)). Residues Cys25, Cys61, Cys93, Cys164, Cys168, and Cys171 each contribute to the [4Fe-4S] cluster site. The 233-residue stretch at 150-382 (STPKHYAYLK…SQTQKKNVEK (233 aa)) folds into the Radical SAM core domain. The 71-residue stretch at 385–455 (KQFVGKIVEA…GYDLVGRVVN (71 aa)) folds into the TRAM domain.

It belongs to the methylthiotransferase family. RimO subfamily. Requires [4Fe-4S] cluster as cofactor.

It is found in the cytoplasm. The enzyme catalyses L-aspartate(89)-[ribosomal protein uS12]-hydrogen + (sulfur carrier)-SH + AH2 + 2 S-adenosyl-L-methionine = 3-methylsulfanyl-L-aspartate(89)-[ribosomal protein uS12]-hydrogen + (sulfur carrier)-H + 5'-deoxyadenosine + L-methionine + A + S-adenosyl-L-homocysteine + 2 H(+). Its function is as follows. Catalyzes the methylthiolation of an aspartic acid residue of ribosomal protein uS12. This is Ribosomal protein uS12 methylthiotransferase RimO from Chlamydia abortus (strain DSM 27085 / S26/3) (Chlamydophila abortus).